The chain runs to 358 residues: 3-dehydroquinate synthase (358 aa).

Residues 70–75, 104–108, 128–129, K141, K150, and 168–171 each bind NAD(+); these read DGEQFK, GVIGD, TT, and CLHT. Zn(2+) contacts are provided by E183, H246, and H263.

Belongs to the sugar phosphate cyclases superfamily. Dehydroquinate synthase family. Co(2+) serves as cofactor. It depends on Zn(2+) as a cofactor. NAD(+) is required as a cofactor.

It is found in the cytoplasm. The catalysed reaction is 7-phospho-2-dehydro-3-deoxy-D-arabino-heptonate = 3-dehydroquinate + phosphate. The protein operates within metabolic intermediate biosynthesis; chorismate biosynthesis; chorismate from D-erythrose 4-phosphate and phosphoenolpyruvate: step 2/7. Catalyzes the conversion of 3-deoxy-D-arabino-heptulosonate 7-phosphate (DAHP) to dehydroquinate (DHQ). In Shewanella baltica (strain OS195), this protein is 3-dehydroquinate synthase.